The chain runs to 338 residues: Mitoferrin-1 (338 aa).

Residues 1–37 form a disordered region; it reads MELRRGGVGSQAAGRRMDGDCRDGGCGSKDAGSEDYE. 3 Solcar repeats span residues 43–131, 141–225, and 232–326; these read ASVS…MKRT, NSHL…LQEQ, and YNPQ…FKYF. 6 consecutive transmembrane segments (helical) span residues 45–64, 106–125, 143–162, 200–219, 234–253, and 301–320; these read VSTH…SIMY, GLNV…FACY, HLAN…AVMN, SYTT…FITY, PQSH…AATT, and GIQA…WSVY.

The protein belongs to the mitochondrial carrier (TC 2.A.29) family. As to quaternary structure, interacts with ACB10; this interaction stabilizes SLC25A37 and enhances the function of SLC25A37 to import mitochondrial iron during erythroid differentiation.

Its subcellular location is the mitochondrion inner membrane. It catalyses the reaction Fe(2+)(in) = Fe(2+)(out). In terms of biological role, mitochondrial iron transporter that specifically mediates iron uptake in developing erythroid cells, thereby playing an essential role in heme biosynthesis. The protein is Mitoferrin-1 (Slc25a37) of Rattus norvegicus (Rat).